Reading from the N-terminus, the 448-residue chain is MSLIASDHFRIVVGLGKSGMSLVRFLASRGVAFAVADTRENPPELATLRRDYPQVEVRCGELDVDFLCRADELYVSPGLALATPALQAAAARGVKLSGDIELFARNAKAPIVAISGSNAKSTVTTLVGEMAAAAGKRVAVGGNLGTPALDLLSDDVELYVMELSSFQLETTDQLGAEVATVLNISEDHMDRYSGLPAYHLAKHRIFRGARQVVFNRQDALTRPLIGEGLPCWTFGLSKPDFKAFGLREEDGEKYLAFEFQNLMPVRELKIRGAHNQSNALAALALGHAVGLPFDAMLAALRTFAGLEHRCQWVRDLDGVAYYNDSKATNVGAALAAIEGLGADIEGKIVLIAGGDGKGADFKDLRGPVAANCRAVILMGRDSDQIGEAIGDAVPLIRVGSLQEAVEQCRATAQPGDVVLLSPACASFDMFKNYEDRGHQFVRIVEELA.

Residue 116-122 coordinates ATP; it reads GSNAKST.

It belongs to the MurCDEF family.

It localises to the cytoplasm. It catalyses the reaction UDP-N-acetyl-alpha-D-muramoyl-L-alanine + D-glutamate + ATP = UDP-N-acetyl-alpha-D-muramoyl-L-alanyl-D-glutamate + ADP + phosphate + H(+). The protein operates within cell wall biogenesis; peptidoglycan biosynthesis. Its function is as follows. Cell wall formation. Catalyzes the addition of glutamate to the nucleotide precursor UDP-N-acetylmuramoyl-L-alanine (UMA). This chain is UDP-N-acetylmuramoylalanine--D-glutamate ligase, found in Pseudomonas fluorescens (strain ATCC BAA-477 / NRRL B-23932 / Pf-5).